The chain runs to 151 residues: 6,7-dimethyl-8-ribityllumazine synthase (151 aa).

Residues Phe15, 49–51, and 73–75 contribute to the 5-amino-6-(D-ribitylamino)uracil site; these read AVE and AVI. A (2S)-2-hydroxy-3-oxobutyl phosphate-binding site is contributed by 78–79; that stretch reads ET. His81 (proton donor) is an active-site residue. Phe106 is a binding site for 5-amino-6-(D-ribitylamino)uracil. A (2S)-2-hydroxy-3-oxobutyl phosphate-binding site is contributed by Arg120.

The protein belongs to the DMRL synthase family. As to quaternary structure, forms an icosahedral capsid composed of 60 subunits, arranged as a dodecamer of pentamers.

The catalysed reaction is (2S)-2-hydroxy-3-oxobutyl phosphate + 5-amino-6-(D-ribitylamino)uracil = 6,7-dimethyl-8-(1-D-ribityl)lumazine + phosphate + 2 H2O + H(+). It participates in cofactor biosynthesis; riboflavin biosynthesis; riboflavin from 2-hydroxy-3-oxobutyl phosphate and 5-amino-6-(D-ribitylamino)uracil: step 1/2. Its function is as follows. Catalyzes the formation of 6,7-dimethyl-8-ribityllumazine by condensation of 5-amino-6-(D-ribitylamino)uracil with 3,4-dihydroxy-2-butanone 4-phosphate. This is the penultimate step in the biosynthesis of riboflavin. The chain is 6,7-dimethyl-8-ribityllumazine synthase from Coxiella burnetii (strain CbuG_Q212) (Coxiella burnetii (strain Q212)).